The primary structure comprises 192 residues: Small ribosomal subunit protein uS5 (192 aa).

Positions 20 to 83 (FVDRLVHINR…EAAKRGLIRV (64 aa)) constitute an S5 DRBM domain. Positions 165 to 192 (ARRGLKVSALQARRRDAEPGSADSADAA) are disordered.

Belongs to the universal ribosomal protein uS5 family. In terms of assembly, part of the 30S ribosomal subunit. Contacts proteins S4 and S8.

Functionally, with S4 and S12 plays an important role in translational accuracy. Located at the back of the 30S subunit body where it stabilizes the conformation of the head with respect to the body. The chain is Small ribosomal subunit protein uS5 from Methylobacterium sp. (strain 4-46).